The chain runs to 251 residues: Phosphate import ATP-binding protein PstB 2 (251 aa).

Residues 5-246 form the ABC transporter domain; sequence LTTENLSLFY…PVKQETNDYI (242 aa). Residue 37 to 44 participates in ATP binding; it reads GPSGCGKS.

It belongs to the ABC transporter superfamily. Phosphate importer (TC 3.A.1.7) family. In terms of assembly, the complex is composed of two ATP-binding proteins (PstB), two transmembrane proteins (PstC and PstA) and a solute-binding protein (PstS).

The protein localises to the cell membrane. The enzyme catalyses phosphate(out) + ATP + H2O = ADP + 2 phosphate(in) + H(+). Part of the ABC transporter complex PstSACB involved in phosphate import. Responsible for energy coupling to the transport system. The protein is Phosphate import ATP-binding protein PstB 2 of Lactiplantibacillus plantarum (strain ATCC BAA-793 / NCIMB 8826 / WCFS1) (Lactobacillus plantarum).